Consider the following 369-residue polypeptide: S-(hydroxymethyl)glutathione dehydrogenase (369 aa).

Residues C40, H62, C92, C95, C98, C106, and C169 each contribute to the Zn(2+) site.

It belongs to the zinc-containing alcohol dehydrogenase family. Class-III subfamily. As to quaternary structure, homodimer. The cofactor is Zn(2+).

It is found in the cytoplasm. The enzyme catalyses S-(hydroxymethyl)glutathione + NADP(+) = S-formylglutathione + NADPH + H(+). It carries out the reaction S-(hydroxymethyl)glutathione + NAD(+) = S-formylglutathione + NADH + H(+). The catalysed reaction is a primary alcohol + NAD(+) = an aldehyde + NADH + H(+). It catalyses the reaction a secondary alcohol + NAD(+) = a ketone + NADH + H(+). The enzyme catalyses S-nitrosoglutathione + NADH + H(+) = S-(hydroxysulfenamide)glutathione + NAD(+). Has high formaldehyde dehydrogenase activity in the presence of glutathione and catalyzes the oxidation of normal alcohols in a reaction that is not GSH-dependent. In addition, hemithiolacetals other than those formed from GSH, including omega-thiol fatty acids, also are substrates. Also acts as a S-nitroso-glutathione reductase by catalyzing the NADH-dependent reduction of S-nitrosoglutathione. The protein is S-(hydroxymethyl)glutathione dehydrogenase (frmA) of Escherichia coli (strain ATCC 8739 / DSM 1576 / NBRC 3972 / NCIMB 8545 / WDCM 00012 / Crooks).